The chain runs to 118 residues: Small ribosomal subunit protein uS13 (118 aa).

Residues 93 to 118 (RNLPVRGQRSKTNARTRKGPRKPIKR) are disordered.

This sequence belongs to the universal ribosomal protein uS13 family. Part of the 30S ribosomal subunit. Forms a loose heterodimer with protein S19. Forms two bridges to the 50S subunit in the 70S ribosome.

Its function is as follows. Located at the top of the head of the 30S subunit, it contacts several helices of the 16S rRNA. In the 70S ribosome it contacts the 23S rRNA (bridge B1a) and protein L5 of the 50S subunit (bridge B1b), connecting the 2 subunits; these bridges are implicated in subunit movement. Contacts the tRNAs in the A and P-sites. The protein is Small ribosomal subunit protein uS13 of Saccharophagus degradans (strain 2-40 / ATCC 43961 / DSM 17024).